The following is a 605-amino-acid chain: MGVSFSCPFAEQDDVEAALDSVTVKSISFGDDDECKTPKRSVNFNDGTLEPTILKSMGSGKMVVEKSVSLKGMQLERMISLNRSVKDNGFEIAKEFSVLDPRNPKHEAAIKLQKVYKSFRTRRKLADCAVLVEQSWWKLLDFAELKRSSISFFDIEKHETAISRWSRARTRAAKVGKGLSKNGKAQKLALQHWLEAIDPRHRYGHNLHFYYNKWLHCQSREPFFYWLDIGEGKEVNLVEKCPRLKLQQQCIKYLGPMERKAYEVVVEDGKFFYKHSGEILQTSDMEDSESKWIFVLSTSKVLYVGKKKKGTFQHSSFLAGGATVAAGRLVVENGVLKAVWPHSGHYQPTEENFMDFLSFLRENDVDITDVKMSPTDEDEFSIYKQRSTHMRNHSLEEDLEAEKTISFQDKVDPSGEEQTLMRNESISRKQSDLETPEKMESFSTFGDEIQSVGSKSTKVSEDYDSGDDEEEEEEMFELEQESMPSEQSSPRGEEKEEGETKESEVVKITEESILKRINSKKETKSFQLGKQLSCKWTTGAGPRIGCVRDYPSELQFQALEQVNLSPRSASVSRLCFSSSSQTQTPQMSPLWRGMSLPTDITLTNS.

One can recognise an IQ domain in the interval 105 to 134 (KHEAAIKLQKVYKSFRTRRKLADCAVLVEQ). Residues 408-505 (QDKVDPSGEE…EEGETKESEV (98 aa)) form a disordered region. The segment covering 425-440 (SISRKQSDLETPEKME) has biased composition (basic and acidic residues). Positions 462–480 (DYDSGDDEEEEEEMFELEQ) are enriched in acidic residues. A compositionally biased stretch (low complexity) spans 481 to 490 (ESMPSEQSSP). Over residues 491–505 (RGEEKEEGETKESEV) the composition is skewed to basic and acidic residues.

Expressed in rosette and cauline leaves, stems, flowers and siliques, and at lower levels in roots.

Its subcellular location is the cytoplasm. It localises to the nucleus. May be involved in biotic and abiotic stress responses. This Arabidopsis thaliana (Mouse-ear cress) protein is IQ domain-containing protein IQM2.